Reading from the N-terminus, the 122-residue chain is Large ribosomal subunit protein uL24 (122 aa).

This sequence belongs to the universal ribosomal protein uL24 family. Part of the 50S ribosomal subunit.

Functionally, one of two assembly initiator proteins, it binds directly to the 5'-end of the 23S rRNA, where it nucleates assembly of the 50S subunit. Located at the polypeptide exit tunnel on the outside of the subunit. The polypeptide is Large ribosomal subunit protein uL24 (Pyrobaculum arsenaticum (strain DSM 13514 / JCM 11321 / PZ6)).